Reading from the N-terminus, the 638-residue chain is Chaperone protein HtpG (638 aa).

Positions 1–346 are a; substrate-binding; sequence MSQQETHGFQ…SNDLPLNVSR (346 aa). Residues 347-563 are b; that stretch reads EILQDNKVTT…EGEMSTQMIK (217 aa). The c stretch occupies residues 564-638; it reads LMQAAGQDVP…MNQMLLASVK (75 aa).

This sequence belongs to the heat shock protein 90 family. As to quaternary structure, homodimer.

The protein resides in the cytoplasm. Its function is as follows. Molecular chaperone. Has ATPase activity. This chain is Chaperone protein HtpG, found in Shewanella pealeana (strain ATCC 700345 / ANG-SQ1).